We begin with the raw amino-acid sequence, 439 residues long: MDGHSNTSVILHTYQQQQSQLIPSIIPQTLPDGYGLTTTISQPDFSGTNAFINTNPWNTTTFPTYRDNQYTNEVSVLNYPTVYDDFSKESTAGTLSDPSLHGSNSSSSTSDVGSSVDCSISPEPILMPCVKRGRPTENPCWAYFHRIDDQLVKCRLCTKVVRSACATNMTKHLERHHTDDYQKVTGQLKLFRMNDAGIRSKMHYQVADTPLTPIPVLPNSYVLPKMDPMEAFDASQYYTMQPDSTAINAQPFPQFDQPQTSADSQTWPLTHFWPNGAQNNMMPQLGEPSTSAIGASVIQEIRKLNLDSDQKRLELEMDQNRRLLLAQKADEKGRVVKTTTKPYQKRNRKTEHPVWAFFKRTGDGNAECIICQGVVKSPCSSNFMRHLMRHHSTEYNDVYLKWIEKRNVTHPGIHCTSVPPPISFPNKDNVRTEPIFTVK.

The segment at 93 to 116 (GTLSDPSLHGSNSSSSTSDVGSSV) is disordered. Positions 96–116 (SDPSLHGSNSSSSTSDVGSSV) are enriched in low complexity. 2 consecutive BED-type zinc fingers follow at residues 135–184 (PTEN…YQKV) and 349–398 (KTEH…YNDV). 8 residues coordinate Zn(2+): Cys154, Cys157, His172, His177, Cys368, Cys371, His386, and His391.

Its function is as follows. Involved in cuticle function and is essential for normal morphological development. In Caenorhabditis briggsae, this protein is Protein dumpy-20 (dpy-20).